We begin with the raw amino-acid sequence, 312 residues long: MSDLQGGYKRGELTVHHDPSVLTRVSKALRGVGRQVALVPTMGALHTGHLELVRQAKLTGAVVIVSIFVNPLQFGAGEDLDAYPRTLDADLELLREAGVELAFVPTAATMYPAGPRTTIHPGPLGAELEGVSRPTHFAGMLTVVAKLLQIAAPNVAYFGEKDYQQLTLIRQMVTDLNFDVRIFGVPTVREHDGLALSSRNRYLDEAQRSAATALSAALIAGAHAAAGGAEAILATAREVLASVPEVEVDYLEVRGVDLGPAPERGDGRLLVAAKVGTTRLIDNVGVAVGTGFLERDAEPPSDASAADELLSR.

ATP is bound at residue 42–49 (MGALHTGH). The Proton donor role is filled by H49. (R)-pantoate is bound at residue Q73. Q73 contacts beta-alanine. 159 to 162 (GEKD) contacts ATP. Q165 serves as a coordination point for (R)-pantoate. Residues V188 and 196–199 (LSSR) each bind ATP.

This sequence belongs to the pantothenate synthetase family. As to quaternary structure, homodimer.

The protein resides in the cytoplasm. It carries out the reaction (R)-pantoate + beta-alanine + ATP = (R)-pantothenate + AMP + diphosphate + H(+). The protein operates within cofactor biosynthesis; (R)-pantothenate biosynthesis; (R)-pantothenate from (R)-pantoate and beta-alanine: step 1/1. In terms of biological role, catalyzes the condensation of pantoate with beta-alanine in an ATP-dependent reaction via a pantoyl-adenylate intermediate. The sequence is that of Pantothenate synthetase from Rhodococcus jostii (strain RHA1).